A 62-amino-acid chain; its full sequence is ATP synthase subunit epsilon, mitochondrial (62 aa).

The residue at position 52 (Thr52) is a Phosphothreonine.

It belongs to the eukaryotic ATPase epsilon family. In terms of assembly, F-type ATPases have 2 components, CF(1) - the catalytic core - and CF(0) - the membrane proton channel. CF(1) has five subunits: alpha(3), beta(3), gamma(1), delta(1), epsilon(1). CF(0) has three main subunits: a, b and c.

It is found in the mitochondrion. The protein localises to the mitochondrion inner membrane. In terms of biological role, mitochondrial membrane ATP synthase (F(1)F(0) ATP synthase or Complex V) produces ATP from ADP in the presence of a proton gradient across the membrane which is generated by electron transport complexes of the respiratory chain. F-type ATPases consist of two structural domains, F(1) - containing the extramembraneous catalytic core, and F(0) - containing the membrane proton channel, linked together by a central stalk and a peripheral stalk. During catalysis, ATP synthesis in the catalytic domain of F(1) is coupled via a rotary mechanism of the central stalk subunits to proton translocation. Part of the complex F(1) domain and of the central stalk which is part of the complex rotary element. Rotation of the central stalk against the surrounding alpha(3)beta(3) subunits leads to hydrolysis of ATP in three separate catalytic sites on the beta subunits. The sequence is that of ATP synthase subunit epsilon, mitochondrial (ATP15) from Saccharomyces cerevisiae (strain ATCC 204508 / S288c) (Baker's yeast).